The primary structure comprises 332 residues: DNA-directed RNA polymerase subunit alpha (332 aa).

The segment at 1 to 231 (MVREKVTVST…DLFIPFLHME (231 aa)) is alpha N-terminal domain (alpha-NTD). Residues 262-332 (LSLESLFIDQ…FALDLPKNLN (71 aa)) form an alpha C-terminal domain (alpha-CTD) region.

This sequence belongs to the RNA polymerase alpha chain family. As to quaternary structure, in plastids the minimal PEP RNA polymerase catalytic core is composed of four subunits: alpha, beta, beta', and beta''. When a (nuclear-encoded) sigma factor is associated with the core the holoenzyme is formed, which can initiate transcription.

The protein resides in the plastid. It catalyses the reaction RNA(n) + a ribonucleoside 5'-triphosphate = RNA(n+1) + diphosphate. Functionally, DNA-dependent RNA polymerase catalyzes the transcription of DNA into RNA using the four ribonucleoside triphosphates as substrates. This chain is DNA-directed RNA polymerase subunit alpha, found in Cuscuta japonica (Japanese dodder).